The chain runs to 3313 residues: Cadherin EGF LAG seven-pass G-type receptor 3 (3313 aa).

Positions 1–31 are cleaved as a signal peptide; it reads MARRPLWWGLPGPSTPLLLLLLFSLFPSSRE. Residues 32-2538 are Extracellular-facing; that stretch reads EMGGGGDQGW…RLEGDLELLA (2507 aa). 2 disordered regions span residues 148-187 and 205-269; these read LPLDALSPGDSDLRNSSPHPSELLAQPDSPRPVAFQRNGR and EPGH…RMRS. Residues 258–268 are compositionally biased toward basic and acidic residues; sequence HESRTAPERMR. Cadherin domains lie at 317-424, 425-536, 537-642, 643-747, 748-849, 850-952, 953-1058, 1059-1160, and 1161-1257; these read PQYN…APVF, EQAQ…APQF, SEKR…SPIF, VSTP…RPEF, TMKE…RPVF, QSAH…APQF, VASH…APVF, PAEE…SPVL, and NNFQ…VVII. An N-linked (GlcNAc...) asparagine glycan is attached at asparagine 623. Asparagine 838 carries an N-linked (GlcNAc...) asparagine glycan. N-linked (GlcNAc...) asparagine glycans are attached at residues asparagine 1173, asparagine 1213, asparagine 1308, and asparagine 1318. The region spanning 1366–1424 is the EGF-like 1; calcium-binding domain; sequence DDNVCLREPCENYMKCVSVLRFDSSAPFLASASTLFRPIQPIAGLRCRCPPGFTGDFCE. 9 disulfides stabilise this stretch: cysteine 1370/cysteine 1381, cysteine 1375/cysteine 1412, cysteine 1414/cysteine 1423, cysteine 1430/cysteine 1441, cysteine 1435/cysteine 1450, cysteine 1452/cysteine 1461, cysteine 1470/cysteine 1481, cysteine 1475/cysteine 1491, and cysteine 1493/cysteine 1504. The EGF-like 2; calcium-binding domain maps to 1426–1462; the sequence is ELDLCYSNPCRNGGACARREGGYTCVCRPRFTGEDCE. Positions 1466–1505 constitute an EGF-like 3; calcium-binding domain; sequence EAGRCVPGVCRNGGTCTNAPNGGFRCQCPAGGAFEGPRCE. In terms of domain architecture, Laminin G-like 1 spans 1506–1710; that stretch reads VAARSFPPSS…VANNGTTAGC (205 aa). Residues asparagine 1640 and asparagine 1704 are each glycosylated (N-linked (GlcNAc...) asparagine). 4 cysteine pairs are disulfide-bonded: cysteine 1684–cysteine 1710, cysteine 1717–cysteine 1728, cysteine 1722–cysteine 1737, and cysteine 1739–cysteine 1748. One can recognise an EGF-like 4; calcium-binding domain in the interval 1713–1749; sequence KSHFCASGPCKNGGLCSERWGGFSCDCPVGFGGKDCR. The Laminin G-like 2 domain maps to 1753–1935; that stretch reads AHPYHFQGNG…SHRINVEPGC (183 aa). A glycan (N-linked (GlcNAc...) asparagine) is linked at asparagine 1761. 9 disulfide bridges follow: cysteine 1906–cysteine 1935, cysteine 1941–cysteine 1952, cysteine 1946–cysteine 1961, cysteine 1963–cysteine 1972, cysteine 1976–cysteine 1987, cysteine 1981–cysteine 1999, cysteine 2001–cysteine 2010, cysteine 2018–cysteine 2031, and cysteine 2033–cysteine 2043. Residues 1937 to 1972 enclose the EGF-like 5; calcium-binding domain; it reads VTNPCASGPCPPHANCKDLWQTFSCTCWPGYYGPGC. A (3R)-3-hydroxyaspartate modification is found at aspartate 1954. The region spanning 1973 to 2011 is the EGF-like 6; calcium-binding domain; sequence VDACLLNPCQNQGSCRHLQGGPHGYTCDCASGYFGQHCE. The EGF-like 7; calcium-binding domain maps to 2012–2044; it reads HRMDQQCPRGWWGSPTCGPCNCDVHKGFDPNCN. An N-linked (GlcNAc...) asparagine glycan is attached at asparagine 2044. Residues 2046–2081 enclose the EGF-like 8; calcium-binding domain; sequence TSGQCHCKEFHYRPRGSDSCLPCDCYPVGSTSRSCA. Disulfide bonds link cysteine 2050–cysteine 2065, cysteine 2052–cysteine 2068, cysteine 2070–cysteine 2080, cysteine 2089–cysteine 2098, and cysteine 2101–cysteine 2113. The region spanning 2068–2115 is the Laminin EGF-like domain; it reads CDCYPVGSTSRSCAPHSGQCPCRPGALGRQCNSCDSPFAEVTASGCRV. A Phosphotyrosine modification is found at tyrosine 2117. 5 N-linked (GlcNAc...) asparagine glycosylation sites follow: asparagine 2173, asparagine 2192, asparagine 2382, asparagine 2472, and asparagine 2504. The segment at 2356–2395 is disordered; sequence HTHVLLPSQSPQPSPSEVLPTSSNAENATASGVVSPPAPL. In terms of domain architecture, GAIN-B spans 2364–2528; sequence QSPQPSPSEV…GVLMDASPRE (165 aa). A compositionally biased stretch (polar residues) spans 2374–2387; the sequence is LPTSSNAENATASG. 2 cysteine pairs are disulfide-bonded: cysteine 2478-cysteine 2510 and cysteine 2498-cysteine 2512. The GPS stretch occupies residues 2478 to 2528; it reads CVQWDPPGPADQHGMWTARDCELVHRNGSHARCRCSRTGTFGVLMDASPRE. A helical transmembrane segment spans residues 2539–2559; it reads VFTHVVVAASVTALVLTAAVL. Residues 2560-2570 are Cytoplasmic-facing; sequence LSLRSLKSNVR. The helical transmembrane segment at 2571-2591 threads the bilayer; the sequence is GIHANVAAALGVAELLFLLGI. Over 2592–2599 the chain is Extracellular; the sequence is HRTHNQLL. The helical transmembrane segment at 2600-2620 threads the bilayer; sequence CTVVAILLHYFFLSTFAWLLV. At 2621 to 2641 the chain is on the cytoplasmic side; that stretch reads QGLHLYRMQVEPRNVDRGAMR. Residues 2642-2662 traverse the membrane as a helical segment; that stretch reads FYHALGWGVPAVLLGLAVGLD. At 2663-2679 the chain is on the extracellular side; it reads PEGYGNPDFCWISIHEP. Residues 2680–2700 form a helical membrane-spanning segment; that stretch reads LIWSFAGPIVLVIVMNGIMFL. At 2701-2724 the chain is on the cytoplasmic side; it reads LAARTSCSTGQREAKKTSVLRTLR. A helical transmembrane segment spans residues 2725–2745; it reads SSFLLLLLVSASWLFGLLAVN. The Extracellular segment spans residues 2746–2752; that stretch reads HSVLAFH. The chain crosses the membrane as a helical span at residues 2753 to 2773; it reads YLHAGLCGLQGLAVLLLFCVL. At 2774-3313 the chain is on the cytoplasmic side; the sequence is NADARAAWTP…SEVPRSEGHS (540 aa). Disordered stretches follow at residues 2887–2927 and 2977–3004; these read AGAD…RPLR and SNKDAANNNQPELALTSGDETSLGRAQR. A compositionally biased stretch (acidic residues) spans 2889-2899; that stretch reads ADSDSDSDLSL. Over residues 2918–2927 the composition is skewed to basic residues; sequence TRGRFQRPLR. Tyrosine 3050 bears the Phosphotyrosine mark. Disordered regions lie at residues 3091-3242 and 3255-3313; these read APVL…PSTE and NSSA…EGHS. Serine 3098 bears the Phosphoserine mark. A compositionally biased stretch (basic and acidic residues) spans 3102–3119; that stretch reads SQERLDTAPARLEPRDRG. Composition is skewed to low complexity over residues 3178 to 3197 and 3255 to 3289; these read QRPLSRDPLLPSRPLDSLSR and NSSALSSVQSSSTPSGPHTTATPSATASALGPSTP. Positions 3290–3301 are enriched in polar residues; it reads RSATSHSISELS.

It belongs to the G-protein coupled receptor 2 family. LN-TM7 subfamily. In terms of processing, the iron and 2-oxoglutarate dependent 3-hydroxylation of aspartate and asparagine is (R) stereospecific within EGF domains. Expressed in the brain. Expressed in cerebellum, olfactory bulb, cerebral cortex, hippocampus and brain stem.

It localises to the cell membrane. Functionally, receptor that may have an important role in cell/cell signaling during nervous system formation. The chain is Cadherin EGF LAG seven-pass G-type receptor 3 (Celsr3) from Rattus norvegicus (Rat).